Reading from the N-terminus, the 520-residue chain is FNIP repeat-containing protein DDB_G0274063/DDB_G0272642 (520 aa).

Disordered regions lie at residues 47-86 (QQQSNNNNNNNNNNNNNNNNNNFINFSNHTNNINNNIDNR) and 100-121 (NISSSSPYTLTSTPSSSSSSSS). Residues 51–84 (NNNNNNNNNNNNNNNNNNFINFSNHTNNINNNID) show a composition bias toward low complexity. 4 FNIP repeats span residues 242–285 (YNNN…FGES), 286–331 (FNQD…FGLS), 332–406 (YNQP…FGVQ), and 453–496 (FNQQ…FHNS).

The polypeptide is FNIP repeat-containing protein DDB_G0274063/DDB_G0272642 (Dictyostelium discoideum (Social amoeba)).